The sequence spans 252 residues: Phosphate import ATP-binding protein PstB (252 aa).

In terms of domain architecture, ABC transporter spans 5-247 (MRGQDVKVFY…PKEQRTQDYI (243 aa)). Residue 37–44 (GPSGCGKS) coordinates ATP.

It belongs to the ABC transporter superfamily. Phosphate importer (TC 3.A.1.7) family. As to quaternary structure, the complex is composed of two ATP-binding proteins (PstB), two transmembrane proteins (PstC and PstA) and a solute-binding protein (PstS).

The protein resides in the cell inner membrane. It carries out the reaction phosphate(out) + ATP + H2O = ADP + 2 phosphate(in) + H(+). In terms of biological role, part of the ABC transporter complex PstSACB involved in phosphate import. Responsible for energy coupling to the transport system. This chain is Phosphate import ATP-binding protein PstB, found in Bartonella henselae (strain ATCC 49882 / DSM 28221 / CCUG 30454 / Houston 1) (Rochalimaea henselae).